A 127-amino-acid polypeptide reads, in one-letter code: Small ribosomal subunit protein eS8 (127 aa).

Belongs to the eukaryotic ribosomal protein eS8 family. Part of the 30S ribosomal subunit.

This Pyrococcus horikoshii (strain ATCC 700860 / DSM 12428 / JCM 9974 / NBRC 100139 / OT-3) protein is Small ribosomal subunit protein eS8 (rps8e).